The chain runs to 128 residues: Flagellar basal body rod protein FlgB (128 aa).

The protein belongs to the flagella basal body rod proteins family. The basal body constitutes a major portion of the flagellar organelle and consists of a number of rings mounted on a central rod. In Gram-negative bacteria, at least four rings, L, P, S and M are present, whereas Gram-positive bacteria lack the L and P rings. The rod consists of about 26 subunits of FlgG in the distal portion, and FlgB, FlgC and FlgF build up the proximal portion of the rod with about 6 subunits each. Rod assembly occurs by export via the flagellum-specific pathway of its constituent proteins and by their incorporation into the rod structure in the probable order of FlgB, FlgC, FlgF and FlgG. Another protein, FliE, also assembles onto the stable rod structure.

It is found in the bacterial flagellum basal body. Structural component of flagellum, the bacterial motility apparatus. Part of the rod structure of flagellar basal body. This chain is Flagellar basal body rod protein FlgB, found in Cereibacter sphaeroides (strain ATCC 17023 / DSM 158 / JCM 6121 / CCUG 31486 / LMG 2827 / NBRC 12203 / NCIMB 8253 / ATH 2.4.1.) (Rhodobacter sphaeroides).